Consider the following 651-residue polypeptide: Acetyl-coenzyme A synthetase (651 aa).

CoA contacts are provided by residues 189-192 (RGGK), Thr-311, and Asn-335. ATP-binding positions include 387-389 (GEP), 411-416 (DTWWQT), Asp-500, and Arg-515. Residue Ser-523 participates in CoA binding. Position 526 (Arg-526) interacts with ATP. The Mg(2+) site is built by Val-537, His-539, and Val-542. Arg-584 is a binding site for CoA. The residue at position 609 (Lys-609) is an N6-acetyllysine.

It belongs to the ATP-dependent AMP-binding enzyme family. Mg(2+) is required as a cofactor. Acetylated. Deacetylation by the SIR2-homolog deacetylase activates the enzyme.

It carries out the reaction acetate + ATP + CoA = acetyl-CoA + AMP + diphosphate. Functionally, catalyzes the conversion of acetate into acetyl-CoA (AcCoA), an essential intermediate at the junction of anabolic and catabolic pathways. AcsA undergoes a two-step reaction. In the first half reaction, AcsA combines acetate with ATP to form acetyl-adenylate (AcAMP) intermediate. In the second half reaction, it can then transfer the acetyl group from AcAMP to the sulfhydryl group of CoA, forming the product AcCoA. This is Acetyl-coenzyme A synthetase from Allorhizobium ampelinum (strain ATCC BAA-846 / DSM 112012 / S4) (Agrobacterium vitis (strain S4)).